A 1954-amino-acid polypeptide reads, in one-letter code: Integrin beta-like protein C (1954 aa).

The signal sequence occupies residues 1–20; it reads MNKLFYLFILIASLFILTDA. Topologically, residues 21 to 1883 are extracellular; sequence SHFRFGTISW…TTTQTNDNKT (1863 aa). N-linked (GlcNAc...) asparagine glycans are attached at residues asparagine 138 and asparagine 354. An EGF-like domain is found at 428–465; that stretch reads YGENCVAVPPCVNGVPNSGINGDGKCLCSNGWTGADCS. Disulfide bonds link cysteine 438–cysteine 453 and cysteine 455–cysteine 464. Asparagine 479 is a glycosylation site (N-linked (GlcNAc...) asparagine). The VWFA domain occupies 521–706; that stretch reads DVYVLVDANL…TGVKNVLSKI (186 aa). 9 N-linked (GlcNAc...) asparagine glycosylation sites follow: asparagine 1348, asparagine 1382, asparagine 1628, asparagine 1678, asparagine 1742, asparagine 1770, asparagine 1820, asparagine 1860, and asparagine 1881. The helical transmembrane segment at 1884–1904 threads the bilayer; that stretch reads VLTGAIAGAAAGTALIAAAAW. The Cytoplasmic portion of the chain corresponds to 1905 to 1954; the sequence is RLLRKAAPPTDTFFSEAAFLGDGVSSNPLYEQSASAAENPLYQSASDTTD.

This sequence belongs to the SIB family. As to quaternary structure, interacts with talA/talin.

The protein resides in the membrane. Its function is as follows. Implicated in cellular adhesion. This is Integrin beta-like protein C (sibC) from Dictyostelium discoideum (Social amoeba).